We begin with the raw amino-acid sequence, 304 residues long: Ferrochelatase (304 aa).

Fe cation is bound by residues H169 and E241.

The protein belongs to the ferrochelatase family.

Its subcellular location is the cytoplasm. It catalyses the reaction heme b + 2 H(+) = protoporphyrin IX + Fe(2+). The protein operates within porphyrin-containing compound metabolism; protoheme biosynthesis; protoheme from protoporphyrin-IX: step 1/1. Its function is as follows. Catalyzes the ferrous insertion into protoporphyrin IX. In Thermoplasma volcanium (strain ATCC 51530 / DSM 4299 / JCM 9571 / NBRC 15438 / GSS1), this protein is Ferrochelatase.